Consider the following 1413-residue polypeptide: Alpha-latrocrustotoxin-Lt1a (1413 aa).

Residues 1–28 constitute a propeptide that is removed on maturation; the sequence is VSIFIFHFSANILVRNSEMKGKRVISKR. The segment at 238-257 is helix H8 is the probable transmembrane region of the tetrameric pore inserted in the target cell membrane; sequence ALFALFYGTQTFISIMFYLV. ANK repeat units lie at residues 457-490, 494-524, 528-557, 562-592, 596-625, 629-658, 664-694, 699-729, 733-762, 766-795, 799-828, 832-861, 866-895, 899-928, 965-995, 996-1026, 1031-1072, 1077-1106, 1109-1139, and 1143-1172; these read DIHR…QVGA, MGRK…LLNV, NGYT…DVNV, NELT…DVNA, AGFT…GINI, SGLT…KVKL, NGMT…DVNA, KNWT…DIST, QAIT…VVDQ, NGFT…NINA, DGST…NIKA, INQM…SLMN, RDEY…DVNE, DGNT…DFRL, RGKT…TLNE, DQCS…NPTA, NQVS…DINK, QQST…DPNK, RGDP…DVNT, and EQFT…DVNA. Residues 1193 to 1413 constitute a propeptide that is removed on maturation; sequence RSLGRRFFRN…NRPTNVLQIK (221 aa).

This sequence belongs to the cationic peptide 01 (latrotoxin) family. 01 (alpha-latrocrustotoxin) subfamily. Homotetramer in membranes. Expressed by the venom gland.

The protein resides in the secreted. Its subcellular location is the target cell membrane. Crustacean-selective presynaptic neurotoxin that induces neurotransmitter exocytosis. May bind to crustacean neurexin-1 homolog, adhesion G protein-coupled receptor L1 homolog, and receptor-type tyrosine-protein phosphatase S homolog, and induces neurotransmitter exocytosis both by forming tetrameric pores in membranes and signaling via G protein-coupled receptor. This recombinant protein form channels in artificial membrane bilayers, that are stabilized by calcium ions and allow calcium flux at negative membrane potentials. This is Alpha-latrocrustotoxin-Lt1a from Latrodectus tredecimguttatus (Mediterranean black widow spider).